We begin with the raw amino-acid sequence, 191 residues long: uncharacterized protein (191 aa).

This is an uncharacterized protein from Methanocaldococcus jannaschii (strain ATCC 43067 / DSM 2661 / JAL-1 / JCM 10045 / NBRC 100440) (Methanococcus jannaschii).